The following is a 649-amino-acid chain: Leucine-rich repeat transmembrane protein FLRT3 (649 aa).

The N-terminal stretch at 1–28 (MISAAWSIFLIGTKIGLFLQVAPLSVMA) is a signal peptide. One can recognise an LRRNT domain in the interval 29-58 (KSCPSVCRCDAGFIYCNDRFLTSIPTGIPE). Residues 29-528 (KSCPSVCRCD…KEPYKNPNLP (500 aa)) lie on the Extracellular side of the membrane. Intrachain disulfides connect Cys-31-Cys-37 and Cys-35-Cys-44. Residues 38 to 67 (DAGFIYCNDRFLTSIPTGIPEDATTLYLQN) are interaction with ADGRL3. LRR repeat units follow at residues 59–80 (DATT…SDLK), 84–104 (KVER…NLPK), 105–126 (YVKE…SLSK), 129–150 (YLEE…EGAF), 155–175 (YLRL…GLPR), 176–197 (TIEE…SLQG), 200–220 (SLKR…GDKV), 226–247 (NLTE…LPGT), 248–269 (NLRK…AFSY), and 272–293 (QLYR…IFDD). An N-linked (GlcNAc...) asparagine glycan is attached at Asn-226. Residues Asn-282 and Asn-296 are each glycosylated (N-linked (GlcNAc...) asparagine). Residues 305–357 (NPWYCGCKMKWVRDWLQSLPVKVNVRGLMCQAPEKVRGMAIKDLNAELFDCKD) form the LRRCT domain. Cysteines 309 and 334 form a disulfide. A disordered region spans residues 387–407 (KQPDIKNPKLTKDHQTTGSPS). Positions 389–401 (PDIKNPKLTKDHQ) are enriched in basic and acidic residues. Residues 409–504 (KTITITVKSV…VCIETETAPL (96 aa)) form the Fibronectin type-III domain. Residues 529 to 549 (LAAIIGGAVALVTIALLALVC) form a helical membrane-spanning segment. The Cytoplasmic segment spans residues 550–649 (WYVHRNGSLF…GIPDSDHSHS (100 aa)). A disordered region spans residues 622 to 649 (LYKNNHSESSSNRSYRDSGIPDSDHSHS).

In terms of assembly, monomer and homodimer. Self-associates (via leucine-rich repeats), giving rise to homooligomers. Interacts with FGFR1. Interacts (via extracellular domain) with ADGRL1/LPHN1 and LPHN2 (via olfactomedin-like domain). Interacts (via extracellular domain) with ADGRL3 (via olfactomedin-like domain); the interaction is direct. Interacts (via extracellular domain) with UNC5B and UNC5D (via extracellular domain); the interaction is direct. Identified in complexes composed of FLRT3, ADGRL3 and UNC5B, respectively FLRT3, ADGRL3 and UNC5D. May also interact (via extracellular domain) with UNC5A and UNC5C. Interacts (via cytoplasmic domain) with ROBO1. Post-translationally, N-glycosylated. Proteolytic cleavage in the juxtamembrane region gives rise to a soluble ectodomain. Cleavage is probably effected by a metalloprotease. Expressed in kidney, brain, pancreas, skeletal muscle, lung, liver, placenta, and heart.

It localises to the cell membrane. The protein localises to the presynaptic cell membrane. The protein resides in the endoplasmic reticulum membrane. Its subcellular location is the cell junction. It is found in the focal adhesion. It localises to the secreted. The protein localises to the cell projection. The protein resides in the axon. Its subcellular location is the growth cone membrane. In terms of biological role, functions in cell-cell adhesion, cell migration and axon guidance, exerting an attractive or repulsive role depending on its interaction partners. Plays a role in the spatial organization of brain neurons. Plays a role in vascular development in the retina. Plays a role in cell-cell adhesion via its interaction with ADGRL3 and probably also other latrophilins that are expressed at the surface of adjacent cells. Interaction with the intracellular domain of ROBO1 mediates axon attraction towards cells expressing NTN1. Mediates axon growth cone collapse and plays a repulsive role in neuron guidance via its interaction with UNC5B, and possibly also other UNC-5 family members. Promotes neurite outgrowth (in vitro). Mediates cell-cell contacts that promote an increase both in neurite number and in neurite length. Plays a role in the regulation of the density of glutamaergic synapses. Plays a role in fibroblast growth factor-mediated signaling cascades. Required for normal morphogenesis during embryonic development, but not for normal embryonic patterning. Required for normal ventral closure, headfold fusion and definitive endoderm migration during embryonic development. Required for the formation of a normal basement membrane and the maintenance of a normal anterior visceral endoderm during embryonic development. This chain is Leucine-rich repeat transmembrane protein FLRT3 (FLRT3), found in Homo sapiens (Human).